A 957-amino-acid polypeptide reads, in one-letter code: Thioredoxin domain-containing protein 11 (957 aa).

Gly residues predominate over residues M1 to S13. Positions M1–L47 are disordered. Positions S32–E44 are enriched in low complexity. Residues L64 to S84 form a helical membrane-spanning segment. One can recognise a Thioredoxin 1 domain in the interval I91–K213. Intrachain disulfides connect C441/C444 and C691/C694. Residues L621–D771 enclose the Thioredoxin 2 domain. A coiled-coil region spans residues A785 to E889. Residues L904–E925 show a composition bias toward basic and acidic residues. The disordered stretch occupies residues L904–D957. Over residues N941–S951 the composition is skewed to polar residues.

The protein belongs to the protein disulfide isomerase family. In terms of assembly, interacts with the cytoplasmic part of DUOX1 and DUOX2. Interacts with TPO and CYBA.

Its subcellular location is the endoplasmic reticulum membrane. Functionally, may act as a redox regulator involved in DUOX proteins folding. The interaction with DUOX1 and DUOX2 suggest that it belongs to a multiprotein complex constituting the thyroid H(2)O(2) generating system. It is however not sufficient to assist DUOX1 and DUOX2 in H(2)O(2) generation. This is Thioredoxin domain-containing protein 11 (TXNDC11) from Bos taurus (Bovine).